The primary structure comprises 186 residues: MSTPLNVVALSGGTSRPSRTLALTEAILAELAEHLHIKPHLIELGEIARPLGSALWRSELPEAVEQQLRLVEKADLLVVTTPVYRGSFTGHFKHLFDLIGQDALVDTPVLLAATGGSERHALVLDHQLRPLFSFLQALTLPIGVFASQAEMADYRVSSAALAARIRLAAERAVPLFGAHHALRKSA.

The protein belongs to the SsuE family.

It catalyses the reaction FMNH2 + NAD(+) = FMN + NADH + 2 H(+). Involved in the dimethyl sulfide degradation pathway. Catalyzes the NADH-dependent reduction of FMN. The polypeptide is NADH-dependent FMN reductase SfnE (Pseudomonas putida (Arthrobacter siderocapsulatus)).